We begin with the raw amino-acid sequence, 288 residues long: Polyamine aminopropyltransferase (288 aa).

Positions 9-238 (ETLHDQFGQY…GIMTFAWATD (230 aa)) constitute a PABS domain. Gln33 provides a ligand contact to S-methyl-5'-thioadenosine. Residues His64 and Asp88 each contribute to the spermidine site. Residues Glu108 and 140–141 (DG) contribute to the S-methyl-5'-thioadenosine site. Catalysis depends on Asp158, which acts as the Proton acceptor. 158 to 161 (DCTD) is a spermidine binding site. Residue Pro165 coordinates S-methyl-5'-thioadenosine.

The protein belongs to the spermidine/spermine synthase family. Homodimer or homotetramer.

The protein localises to the cytoplasm. It carries out the reaction S-adenosyl 3-(methylsulfanyl)propylamine + putrescine = S-methyl-5'-thioadenosine + spermidine + H(+). The protein operates within amine and polyamine biosynthesis; spermidine biosynthesis; spermidine from putrescine: step 1/1. In terms of biological role, catalyzes the irreversible transfer of a propylamine group from the amino donor S-adenosylmethioninamine (decarboxy-AdoMet) to putrescine (1,4-diaminobutane) to yield spermidine. In Shigella sonnei (strain Ss046), this protein is Polyamine aminopropyltransferase.